Here is a 170-residue protein sequence, read N- to C-terminus: MSEHVSPQELRRKWKLANAEPLEGGHRLEAYRALAQSCPAFVPNLLSLSRTLLAGRNEAADPEAAVSEAEQVLRSASDVSAGAPEPLLALGHFLVSVRQAPDEAERAFSSAASAAMALLEEAWAGWIHALGAQGQLEAALEVEERARSLFPSSKAISQAVAFARAQSGTR.

This is an uncharacterized protein from Myxococcus xanthus.